We begin with the raw amino-acid sequence, 150 residues long: MNVILLDKIANLGNLGDQVSVKAGYARNFLLPQGKAVVANESNVKVFEARRAELEAKLAAELAAANLRAEKITALEAVVIASKAGDEGKLFGSVGNRDIADAVTAAGVELAKSEVRLPLGALRTTGDFEVEVQLHTEVKAVVKVSVVAEA.

Belongs to the bacterial ribosomal protein bL9 family.

Functionally, binds to the 23S rRNA. In Shewanella baltica (strain OS223), this protein is Large ribosomal subunit protein bL9.